The sequence spans 337 residues: 4-hydroxyproline 2-epimerase (337 aa).

Cysteine 91 functions as the Proton acceptor in the catalytic mechanism. Residues 92–93 (GH), aspartate 252, and 257–258 (GT) each bind substrate.

The protein belongs to the proline racemase family.

The enzyme catalyses trans-4-hydroxy-L-proline = cis-4-hydroxy-D-proline. Its function is as follows. Catalyzes the epimerization of trans-4-hydroxy-L-proline (t4LHyp) to cis-4-hydroxy-D-proline (c4DHyp). Is involved in a degradation pathway that converts t4LHyp to alpha-ketoglutarate, which allows R.sphaeroides to grow on t4LHyp as a sole carbon source. Displays no proline racemase activity. This is 4-hydroxyproline 2-epimerase from Cereibacter sphaeroides (strain ATCC 17023 / DSM 158 / JCM 6121 / CCUG 31486 / LMG 2827 / NBRC 12203 / NCIMB 8253 / ATH 2.4.1.) (Rhodobacter sphaeroides).